The primary structure comprises 362 residues: Oryzain gamma chain (362 aa).

Residues 1–24 (MAHRRIILLLAAAAVAATSAVAAA) form the signal peptide. A propeptide spans 25–144 (SSGFDDSNPI…GNHRMRDAAA (120 aa)) (activation peptide). N-linked (GlcNAc...) asparagine glycosylation is present at asparagine 128. Intrachain disulfides connect cysteine 166-cysteine 209 and cysteine 200-cysteine 242. Residue cysteine 169 is part of the active site. Asparagine 258 is a glycosylation site (N-linked (GlcNAc...) asparagine). The cysteines at positions 300 and 350 are disulfide-linked. Catalysis depends on residues histidine 309 and asparagine 329.

Belongs to the peptidase C1 family. In terms of tissue distribution, expressed only in seeds.

The polypeptide is Oryzain gamma chain (Oryza sativa subsp. japonica (Rice)).